A 363-amino-acid polypeptide reads, in one-letter code: Thioredoxin domain-containing protein C13F5.05, mitochondrial (363 aa).

A mitochondrion-targeting transit peptide spans 1–24 (MLFRIPTLFTLFLACFSLVSGVFG). In terms of domain architecture, Thioredoxin spans 32–141 (NTIELNSKNF…KSLQKFVSDS (110 aa)).

It localises to the mitochondrion. The protein is Thioredoxin domain-containing protein C13F5.05, mitochondrial of Schizosaccharomyces pombe (strain 972 / ATCC 24843) (Fission yeast).